We begin with the raw amino-acid sequence, 106 residues long: Thioredoxin (106 aa).

The region spanning 1 to 106 (GATVKVTNAT…RLAAFLDASL (106 aa)) is the Thioredoxin domain. A disulfide bridge links C31 with C34.

This sequence belongs to the thioredoxin family.

Its function is as follows. Participates in various redox reactions through the reversible oxidation of its active center dithiol to a disulfide and catalyzes dithiol-disulfide exchange reactions. The chain is Thioredoxin (trxA) from Kitasatospora aureofaciens (Streptomyces aureofaciens).